The sequence spans 33 residues: Brevinin-2Rh (33 aa).

A disulfide bridge connects residues Cys27 and Cys33.

Expressed by the skin glands.

Its subcellular location is the secreted. Functionally, antimicrobial peptide. In Pelophylax ridibundus (Marsh frog), this protein is Brevinin-2Rh.